Reading from the N-terminus, the 84-residue chain is Large ribosomal subunit protein bL27 (84 aa).

The interval Met-1 to Gly-22 is disordered.

This sequence belongs to the bacterial ribosomal protein bL27 family.

This chain is Large ribosomal subunit protein bL27, found in Shewanella pealeana (strain ATCC 700345 / ANG-SQ1).